A 381-amino-acid polypeptide reads, in one-letter code: Creatine kinase B-type (381 aa).

Serine 4 carries the phosphoserine modification. The 88-residue stretch at 11–98 (KLRFPAEDEF…FDPIIEDRHG (88 aa)) folds into the Phosphagen kinase N-terminal domain. Threonine 35 carries the phosphothreonine modification. Lysine 45 participates in a covalent cross-link: Glycyl lysine isopeptide (Lys-Gly) (interchain with G-Cter in ubiquitin). Creatine is bound at residue valine 72. The segment covering 96-110 (RHGGYKPSDEHKTDL) has biased composition (basic and acidic residues). A disordered region spans residues 96–122 (RHGGYKPSDEHKTDLNPDNLQGGDDLD). Residues lysine 101 and lysine 107 each participate in a glycyl lysine isopeptide (Lys-Gly) (interchain with G-Cter in ubiquitin) cross-link. Phosphotyrosine is present on tyrosine 125. One can recognise a Phosphagen kinase C-terminal domain in the interval 125–367 (YVLSSRVRTG…KLLIEMEQRL (243 aa)). ATP-binding positions include 128-132 (SSRVR), arginine 130, arginine 132, and histidine 191. The segment at 130–138 (RVRTGRSIR) is internal MTS-like signal. Serine 199 is modified (phosphoserine). Glutamate 232 provides a ligand contact to creatine. Arginine 236 provides a ligand contact to ATP. 3'-nitrotyrosine is present on tyrosine 269. Serine 285 contacts creatine. Arginine 292 provides a ligand contact to ATP. At serine 309 the chain carries Phosphoserine. ATP is bound by residues arginine 320, 320–325 (RGTGGV), and aspartate 335. Threonine 322 is modified (phosphothreonine). A Glycyl lysine isopeptide (Lys-Gly) (interchain with G-Cter in ubiquitin) cross-link involves residue lysine 381.

Belongs to the ATP:guanido phosphotransferase family. As to quaternary structure, dimer of identical or non-identical chains, which can be either B (brain type) or M (muscle type). With MM being the major form in skeletal muscle and myocardium, MB existing in myocardium, and BB existing in many tissues, especially brain. Interacts with SLC12A6 (via C-terminus); the interaction may be required for SLC12A6 potassium-chloride cotransport activity. In terms of processing, ubiquitinated by the ECS(ASB9) complex, leading to its degradation by the proteasome.

The protein localises to the cytoplasm. It is found in the cytosol. It localises to the mitochondrion. The protein resides in the cell membrane. The catalysed reaction is creatine + ATP = N-phosphocreatine + ADP + H(+). Reversibly catalyzes the transfer of phosphate between ATP and various phosphogens (e.g. creatine phosphate). Creatine kinase isoenzymes play a central role in energy transduction in tissues with large, fluctuating energy demands, such as skeletal muscle, heart, brain and spermatozoa. Acts as a key regulator of adaptive thermogenesis as part of the futile creatine cycle: localizes to the mitochondria of thermogenic fat cells and acts by mediating phosphorylation of creatine to initiate a futile cycle of creatine phosphorylation and dephosphorylation. During the futile creatine cycle, creatine and N-phosphocreatine are in a futile cycle, which dissipates the high energy charge of N-phosphocreatine as heat without performing any mechanical or chemical work. This chain is Creatine kinase B-type, found in Homo sapiens (Human).